We begin with the raw amino-acid sequence, 924 residues long: Protein translocase subunit SecA (924 aa).

ATP is bound by residues glutamine 87, 105-109, and aspartate 517; that span reads GEGKT. A disordered region spans residues 886–906; it reads VPAADRDPNDPSTWGKVGRNE. Zn(2+) is bound by residues cysteine 908, cysteine 910, cysteine 919, and histidine 920.

This sequence belongs to the SecA family. Monomer and homodimer. Part of the essential Sec protein translocation apparatus which comprises SecA, SecYEG and auxiliary proteins SecDF-YajC and YidC. Zn(2+) is required as a cofactor.

It localises to the cell inner membrane. The protein localises to the cytoplasm. The catalysed reaction is ATP + H2O + cellular proteinSide 1 = ADP + phosphate + cellular proteinSide 2.. Functionally, part of the Sec protein translocase complex. Interacts with the SecYEG preprotein conducting channel. Has a central role in coupling the hydrolysis of ATP to the transfer of proteins into and across the cell membrane, serving both as a receptor for the preprotein-SecB complex and as an ATP-driven molecular motor driving the stepwise translocation of polypeptide chains across the membrane. This chain is Protein translocase subunit SecA, found in Azorhizobium caulinodans (strain ATCC 43989 / DSM 5975 / JCM 20966 / LMG 6465 / NBRC 14845 / NCIMB 13405 / ORS 571).